Here is a 163-residue protein sequence, read N- to C-terminus: Transcriptional repressor NrdR (163 aa).

A zinc finger spans residues 3–34 (CPFCRHDDSRVVDSRTTDDGSSIRRRRQCPNC). The region spanning 46 to 136 (LSVIKRSGAP…VYQAFDSLAD (91 aa)) is the ATP-cone domain.

The protein belongs to the NrdR family. The cofactor is Zn(2+).

In terms of biological role, negatively regulates transcription of bacterial ribonucleotide reductase nrd genes and operons by binding to NrdR-boxes. The protein is Transcriptional repressor NrdR of Kineococcus radiotolerans (strain ATCC BAA-149 / DSM 14245 / SRS30216).